A 380-amino-acid chain; its full sequence is Alkanesulfonate monooxygenase (380 aa).

The protein belongs to the SsuD family. As to quaternary structure, homotetramer.

The enzyme catalyses an alkanesulfonate + FMNH2 + O2 = an aldehyde + FMN + sulfite + H2O + 2 H(+). Functionally, catalyzes the desulfonation of aliphatic sulfonates. This chain is Alkanesulfonate monooxygenase, found in Pectobacterium carotovorum subsp. carotovorum (strain PC1).